The primary structure comprises 769 residues: Dolichyl-phosphate-mannose--protein mannosyltransferase 2 (769 aa).

A disordered region spans residues 1 to 44 (MSTSVEPNETEALLRKQNDLSTTASIEEKYPHQQGEAAEDDDDT). Asparagine 8 carries N-linked (GlcNAc...) asparagine glycosylation. Residues 59-79 (SLKQVESILAPIVFTALSFFV) traverse the membrane as a helical segment. N-linked (GlcNAc...) asparagine glycosylation is present at asparagine 132. 3 helical membrane passes run 152 to 169 (MRLF…LAYF), 176 to 194 (FSMF…ESSY), and 200 to 218 (FILL…VFCF). N-linked (GlcNAc...) asparagine glycosylation is present at asparagine 226. The next 2 membrane-spanning stretches (helical) occupy residues 252–272 (VKMV…VDLW) and 288–308 (HWFA…MLSF). A glycan (N-linked (GlcNAc...) asparagine) is linked at asparagine 324. One can recognise an MIR 1 domain in the interval 342-397 (PREVSMFHSVITLKNQGLSGGLLHSHVQTFPEGSKQQQVTTYGHKDSNNNWIFQRA). Residues asparagine 408, asparagine 453, and asparagine 462 are each glycosylated (N-linked (GlcNAc...) asparagine). MIR domains lie at 412-468 (IEYI…VEIM) and 474-534 (EDKM…IENN). 4 helical membrane passes run 615 to 635 (TTWT…YYLI), 655 to 675 (FLMG…PFAI), 679 to 699 (VTYV…FCYE), and 718 to 738 (LLYL…FWYF).

The protein belongs to the glycosyltransferase 39 family. In terms of assembly, PMT1 and PMT2 form a functional heterodimer.

It localises to the endoplasmic reticulum membrane. It catalyses the reaction a di-trans,poly-cis-dolichyl beta-D-mannosyl phosphate + L-seryl-[protein] = 3-O-(alpha-D-mannosyl)-L-seryl-[protein] + a di-trans,poly-cis-dolichyl phosphate + H(+). The enzyme catalyses a di-trans,poly-cis-dolichyl beta-D-mannosyl phosphate + L-threonyl-[protein] = 3-O-(alpha-D-mannosyl)-L-threonyl-[protein] + a di-trans,poly-cis-dolichyl phosphate + H(+). Its pathway is protein modification; protein glycosylation. Functionally, protein mannosyltransferase (PMT) involved in hyphal growth and drug sensitivity. Transfers mannose from Dol-P-mannose to Ser or Thr residues on proteins. PMT1, PMT2 and PMT4 account for most of the protein-O-glycosylation activity, while PMT5 and PMT6 may specifically modulate a much narrower spectrum of target proteins. Essential protein that plays an important role in virulence. The protein is Dolichyl-phosphate-mannose--protein mannosyltransferase 2 of Candida albicans (strain SC5314 / ATCC MYA-2876) (Yeast).